Here is a 312-residue protein sequence, read N- to C-terminus: D-alanine--D-alanine ligase (312 aa).

An ATP-grasp domain is found at 99 to 304 (KKILKAEGIP…FEDLVEKILM (206 aa)). 131–186 (LQTLKLPVVIKAPREGSTIGIEFVFSKQELPKAIKKVLEIDKQLLVEEFIEGVEVT) is an ATP binding site. Residues aspartate 257, glutamate 271, and asparagine 273 each contribute to the Mg(2+) site.

The protein belongs to the D-alanine--D-alanine ligase family. Requires Mg(2+) as cofactor. It depends on Mn(2+) as a cofactor.

Its subcellular location is the cytoplasm. It catalyses the reaction 2 D-alanine + ATP = D-alanyl-D-alanine + ADP + phosphate + H(+). The protein operates within cell wall biogenesis; peptidoglycan biosynthesis. In terms of biological role, cell wall formation. This Carboxydothermus hydrogenoformans (strain ATCC BAA-161 / DSM 6008 / Z-2901) protein is D-alanine--D-alanine ligase.